The primary structure comprises 157 residues: Protein E6 (157 aa).

Zinc fingers lie at residues 39-75 (CNFCGKFLDFLEVCDFDKKQLTLIWKGHFVTACCRSC) and 112-148 (CQTCLSFLDTIEKLDSCGRGLPFHKVRDRWKGICRQC).

This sequence belongs to the papillomaviridae E6 protein family. Forms homodimers. Interacts with ubiquitin-protein ligase UBE3A/E6-AP; this interaction stimulates UBE3A ubiquitin activity. Interacts with host BAK1.

The protein localises to the host cytoplasm. The protein resides in the host nucleus. In terms of biological role, plays a major role in the induction and maintenance of cellular transformation. E6 associates with host UBE3A/E6-AP ubiquitin-protein ligase and modulates its activity. Protects host keratinocytes from apoptosis by mediating the degradation of host BAK1. May also inhibit host immune response. This chain is Protein E6, found in Homo sapiens (Human).